The primary structure comprises 419 residues: MQLLNFGLLLLPFVAGDLAPQPEPLLAGPSDVVPGQYIVTLKEGLTSAQIRDHKKWVSSVHRANLDSFAAGASGVETEGIMKHFHIHDLNMYSGGFDEKTVEDLSRNPYVKSVHPDQHVYLAKTVTQRQARWGLGYMSSKGKPVPLHSTLVDYSYDDKAGEGVWAYVLDTGINVNHIEFEGRAILGHNAIPNKPHTDEFGHGTYVAGIIAGKTYGVAKKANVVSAKAFDTGSSTYNYILETYDWIVRNITDSNRKNKAVINLSISGAKYQPFDDAVEKAFKAGITTVVAAGNDGKDAKNNTPASSPNAITVGAVRWENTRPSFSNYGKLVDIWAPGELIKSCWKGGNNATSTQSGTSAASPHVAGLVAYLMSIENLPSPSAVTARVLNLTIPNLVKDAKDSPNRVAYNGIQERKFKLPK.

The N-terminal stretch at 1-16 (MQLLNFGLLLLPFVAG) is a signal peptide. The propeptide occupies 17-122 (DLAPQPEPLL…VHPDQHVYLA (106 aa)). The Inhibitor I9 domain maps to 36–122 (QYIVTLKEGL…VHPDQHVYLA (87 aa)). The region spanning 131-419 (RWGLGYMSSK…IQERKFKLPK (289 aa)) is the Peptidase S8 domain. Active-site charge relay system residues include Asp169 and His201. N-linked (GlcNAc...) asparagine glycosylation is found at Asn248, Asn261, and Asn348. The active-site Charge relay system is Ser357. A glycan (N-linked (GlcNAc...) asparagine) is linked at Asn388.

It belongs to the peptidase S8 family.

Its subcellular location is the secreted. Its function is as follows. Secreted subtilisin-like serine protease with keratinolytic activity that contributes to pathogenicity. In Trichophyton verrucosum (Cattle ringworm fungus), this protein is Subtilisin-like protease 2 (SUB2).